A 314-amino-acid chain; its full sequence is Cathepsin L 2 (314 aa).

The N-terminal stretch at 1-24 (MMLLGASLYLNNTQEVSDEIDTAN) is a signal peptide. A propeptide spans 25–109 (LYANWKMKYN…NASNANFQYK (85 aa)) (activation peptide). 3 cysteine pairs are disulfide-bonded: Cys-132-Cys-175, Cys-166-Cys-207, and Cys-259-Cys-302. The active site involves Cys-135. Residues His-265 and Asn-282 contribute to the active site.

It belongs to the peptidase C1 family.

The protein localises to the secreted. The catalysed reaction is Specificity close to that of papain. As compared to cathepsin B, cathepsin L exhibits higher activity toward protein substrates, but has little activity on Z-Arg-Arg-NHMec, and no peptidyl-dipeptidase activity.. In terms of biological role, may be involved in extracellular digestion. The sequence is that of Cathepsin L 2 from Paramecium tetraurelia.